The primary structure comprises 1518 residues: MYGTWFTTGKVTDLLARTGLDRVPVWVPVVLGVVLMAFVGSVRIDPALQGWVSIGTVTLLLVLNRRRGRGITVFLMMLSLLVSLRYIVWRLTATVQFSNWLQTALAVLLLLAEAYALMTLCLSYFQMAWPLRRREHPLPEDMAQWPSVDVFVPSYNEELSLVRSTVLGALDLDWPADRLNVYILDDGRRKAFHDFAVEAGAGYIIRAENNHAKAGNLNHALAVTDSPFAVIFDCDHVPTRGFLRRTIGWMMADPNLALLQTPHHFYAPDPFQRNLAGGMHVPPEGNMFYGLVQDGNDFWDATFFCGSCAIIRREAVMGIGGFATETVTEDAHTALKMQRRGWGTAYLREPLAAGLATERLILHIGQRVRWARGMIQIMRLDNPMLGAGLRWEQRLCYLSAMSHFLFAIPRLTFLVSPLAFLFLGQNIIAASPLAISVYALPHIFHSVITLSRIEGRWRYSFWSEIYETSLALFLVRITIVTLLQPHKGKFNVTDKGGLLARGYFDWDAVYPNVILAGVLCAALLRGVFGIVWQFHDRLALQSFILNTLWVVISLIIVLASIAVGRETRQTRNAPRVSVRLPVVVTDAHGRQMEGHTHDISLGGLAVGTRLATPDMVGGEVTVRYDSARDGIHVGVPARVLDARDGTLRLRWAVRDLEDERQVVSMVFGRNDAWAGWADFAPDRPLRSLAMVFRSIGGLLRRRPAEAPRALHEMGEGELPATEEKLEKQSFVLKPVPRSARHGATASAALFVAFTALVPAAMAQEAPSPDQSGVTAETPFGDSNTGVVPDALPAIDPAVADRISDAEVTRTLTFRNLGATTGPLTLRGYSPLQGLDVVVPANRVVTHAQLTLSGALSPSLLPEANAVTVTLNEQYVGTLKVDPQHPQFGPVSFDIDPLYFTGDNKLNFHFAGEYRRDCNDLFNEILWARISDMSRITLTTVRITPERKLSRLPAPFFDPNQRSTLRVPVVLPATGDRGALRAAGLVASWFGRIADFRKLSFPVSTTIPASGNAVEVGVNLPVDAEGGRPAGPMLAEVANPNDRWGTVLVVTGRTAQEVEVAARALVFSPDTLGGVASKVVSDVSLETRHPYDAPAFVPTDRPVRFGELVGAADLQGGGFAPAGMTLPFHLPPDLYTWRGRPFLMNMWVRAPGGPVVDLETSRVDVSLNNNYLQSYTLSPPGLWRKWSERLVNQHAGAVGHVTALPPWLLFGQNQLQFNFDARPIDRGACRRTPGDIHMSVDSDSTLDFRRGYHFAEMPNLSYFAEAAFPFSRMADLSETTVVLPDHPDTGTTGAFLDLMGFFGASTWYPAAGVTVMGADEVAQTPPKGDIVVLGTAAQLGGAASGLLARSPYVIHDRHITVGQRMGLQGIWYLFQDHDHAGLKDGVTANLNAPIAEAGVLLAAQSPYDSQRSVVAFTGDTPERIHDLVLSLRNKGDLPSLQGDLVLKNGDRFTSYRTAPVYTVGSLPLWLRLDWFLGHHPSALYLAGLAGAGLAALGVWAWLRGWSRRRIARDDLTGEL.

The tract at residues 1–731 (MYGTWFTTGK…EEKLEKQSFV (731 aa)) is catalytic. The next 3 membrane-spanning stretches (helical) occupy residues 24 to 44 (PVWV…SVRI), 71 to 91 (ITVF…VWRL), and 105 to 125 (LAVL…LSYF). The tract at residues 144–237 (QWPSVDVFVP…FAVIFDCDHV (94 aa)) is catalytic subdomain A. Active-site residues include aspartate 186 and aspartate 330. Residues 314–374 (EAVMGIGGFA…GQRVRWARGM (61 aa)) form a catalytic subdomain B region. Helical transmembrane passes span 404 to 424 (FLFA…LFLG), 428 to 448 (IAAS…HSVI), 465 to 485 (IYET…LLQP), 514 to 534 (ILAG…VWQF), and 543 to 563 (FILN…SIAV). The PilZ domain maps to 569–668 (QTRNAPRVSV…ERQVVSMVFG (100 aa)). Residues 732-1518 (LKPVPRSARH…IARDDLTGEL (787 aa)) form a cyclic di-GMP binding domain region. The interval 765-785 (APSPDQSGVTAETPFGDSNTG) is disordered. Polar residues predominate over residues 768 to 785 (PDQSGVTAETPFGDSNTG). The helical transmembrane segment at 1481–1501 (ALYLAGLAGAGLAALGVWAWL) threads the bilayer.

In the N-terminal section; belongs to the glycosyltransferase 2 family. The protein in the C-terminal section; belongs to the AcsB/BcsB family.

Its subcellular location is the cell inner membrane. It carries out the reaction [(1-&gt;4)-beta-D-glucosyl](n) + UDP-alpha-D-glucose = [(1-&gt;4)-beta-D-glucosyl](n+1) + UDP + H(+). It participates in glycan metabolism; bacterial cellulose biosynthesis. The protein is Putative cellulose synthase 3 (bcsABII-B) of Komagataeibacter xylinus (Gluconacetobacter xylinus).